The primary structure comprises 97 residues: Aspartyl/glutamyl-tRNA(Asn/Gln) amidotransferase subunit C (97 aa).

The segment covering 74–84 has biased composition (low complexity); it reads TPEEATAAAPA. The segment at 74–97 is disordered; sequence TPEEATAAAPAREGTAFKVPRIIE.

It belongs to the GatC family. As to quaternary structure, heterotrimer of A, B and C subunits.

It catalyses the reaction L-glutamyl-tRNA(Gln) + L-glutamine + ATP + H2O = L-glutaminyl-tRNA(Gln) + L-glutamate + ADP + phosphate + H(+). The enzyme catalyses L-aspartyl-tRNA(Asn) + L-glutamine + ATP + H2O = L-asparaginyl-tRNA(Asn) + L-glutamate + ADP + phosphate + 2 H(+). Its function is as follows. Allows the formation of correctly charged Asn-tRNA(Asn) or Gln-tRNA(Gln) through the transamidation of misacylated Asp-tRNA(Asn) or Glu-tRNA(Gln) in organisms which lack either or both of asparaginyl-tRNA or glutaminyl-tRNA synthetases. The reaction takes place in the presence of glutamine and ATP through an activated phospho-Asp-tRNA(Asn) or phospho-Glu-tRNA(Gln). This is Aspartyl/glutamyl-tRNA(Asn/Gln) amidotransferase subunit C from Anaeromyxobacter dehalogenans (strain 2CP-1 / ATCC BAA-258).